The following is a 607-amino-acid chain: UvrABC system protein C (607 aa).

The region spanning 16 to 94 (GRPGVYRMFD…IKEWRPPYNI (79 aa)) is the GIY-YIG domain. Residues 203 to 238 (NALTDELSTAMEAAASTLDFEKAAELRDQISLLRRV) enclose the UVR domain.

This sequence belongs to the UvrC family. In terms of assembly, interacts with UvrB in an incision complex.

It localises to the cytoplasm. The UvrABC repair system catalyzes the recognition and processing of DNA lesions. UvrC both incises the 5' and 3' sides of the lesion. The N-terminal half is responsible for the 3' incision and the C-terminal half is responsible for the 5' incision. The protein is UvrABC system protein C of Pseudomonas fluorescens (strain ATCC BAA-477 / NRRL B-23932 / Pf-5).